A 370-amino-acid chain; its full sequence is Cytochrome b (370 aa).

4 helical membrane passes run 30 to 50 (FGSMLGMVLVFQIVTGTFLAF), 74 to 96 (WIFRIFHFNGASLFFIFLYLHIF), 109 to 129 (VWMSGLTIYLLVMMEAFMGYV), and 175 to 195 (FFVLHFLLPWAILFIVLGHLI). Heme b is bound by residues histidine 80 and histidine 94. Residues histidine 179 and histidine 193 each contribute to the heme b site. Residue histidine 198 participates in a ubiquinone binding. 4 helical membrane passes run 221 to 240 (YIGKDAYNIVVWLVFIVLSL), 284 to 304 (VLGVIALLMSIVTFYFFALVN), 316 to 336 (FLVFLFIISSVILSWLGQCMV), and 342 to 362 (VLSPLFSVIYFGLAYLLLGIF).

This sequence belongs to the cytochrome b family. The main subunits of complex b-c1 are: cytochrome b, cytochrome c1 and the Rieske protein. Heme b serves as cofactor.

It localises to the mitochondrion inner membrane. Functionally, component of the ubiquinol-cytochrome c reductase complex (complex III or cytochrome b-c1 complex) that is part of the mitochondrial respiratory chain. The b-c1 complex mediates electron transfer from ubiquinol to cytochrome c. Contributes to the generation of a proton gradient across the mitochondrial membrane that is then used for ATP synthesis. The polypeptide is Cytochrome b (ctb-1) (Caenorhabditis briggsae).